Consider the following 419-residue polypeptide: Serine--tRNA ligase (419 aa).

226-228 contributes to the L-serine binding site; it reads TSE. ATP contacts are provided by residues 257-259 and valine 273; that span reads RRE. Glutamate 280 serves as a coordination point for L-serine. 344–347 serves as a coordination point for ATP; sequence ELTS. Residue threonine 379 coordinates L-serine.

It belongs to the class-II aminoacyl-tRNA synthetase family. Type-1 seryl-tRNA synthetase subfamily. In terms of assembly, homodimer. The tRNA molecule binds across the dimer.

The protein resides in the cytoplasm. It carries out the reaction tRNA(Ser) + L-serine + ATP = L-seryl-tRNA(Ser) + AMP + diphosphate + H(+). The catalysed reaction is tRNA(Sec) + L-serine + ATP = L-seryl-tRNA(Sec) + AMP + diphosphate + H(+). It participates in aminoacyl-tRNA biosynthesis; selenocysteinyl-tRNA(Sec) biosynthesis; L-seryl-tRNA(Sec) from L-serine and tRNA(Sec): step 1/1. Catalyzes the attachment of serine to tRNA(Ser). Is also able to aminoacylate tRNA(Sec) with serine, to form the misacylated tRNA L-seryl-tRNA(Sec), which will be further converted into selenocysteinyl-tRNA(Sec). The sequence is that of Serine--tRNA ligase from Mycolicibacterium vanbaalenii (strain DSM 7251 / JCM 13017 / BCRC 16820 / KCTC 9966 / NRRL B-24157 / PYR-1) (Mycobacterium vanbaalenii).